Here is a 410-residue protein sequence, read N- to C-terminus: MNQQLKNLTLPIYMDYQSTTPIDPRVMEAMLPYFTTKFGNPHSRSHSFGWEAENAVENARSMVAKVIGADSKEIIFTSGATESNNLVIKGIAKFYGNKKKHIITLVSEHKCVLNACRHLEQEGIKITYLPIKSNGIIDLETLKNAITDQTLLVSVMAVNNEIGVIQPLKEIGKICRERNVFFHSDIAQGFGKIPINVNECNIDLASISGHKIYGPKGIGALYIRKKPRVRVTPLINGGGQERGMRSGTLPTPLIVGLGIASEIAYNEMEKDTQHVNYLFDRFLNNIHSKISEVYLNGDKDQRYKGNLNLSFAGVEGESIILAIKDLAVSSGSACTSASLEPSYVLRSIGISEELAHTSIRFGIGRFTTEQEIDYAVNLVCSKIDKLRRLSPLWEMMQEGVDLKKIRWTAH.

Residues 80–81 (AT), Asn-160, Gln-188, and 208–210 (SGH) each bind pyridoxal 5'-phosphate. Lys-211 is subject to N6-(pyridoxal phosphate)lysine. Thr-248 serves as a coordination point for pyridoxal 5'-phosphate. The Cysteine persulfide intermediate role is filled by Cys-334. Position 334 (Cys-334) interacts with [2Fe-2S] cluster.

This sequence belongs to the class-V pyridoxal-phosphate-dependent aminotransferase family. NifS/IscS subfamily. As to quaternary structure, homodimer. Forms a heterotetramer with IscU, interacts with other sulfur acceptors. Pyridoxal 5'-phosphate is required as a cofactor.

Its subcellular location is the cytoplasm. The enzyme catalyses (sulfur carrier)-H + L-cysteine = (sulfur carrier)-SH + L-alanine. Its pathway is cofactor biosynthesis; iron-sulfur cluster biosynthesis. Master enzyme that delivers sulfur to a number of partners involved in Fe-S cluster assembly, tRNA modification or cofactor biosynthesis. Catalyzes the removal of elemental sulfur atoms from cysteine to produce alanine. Functions as a sulfur delivery protein for Fe-S cluster synthesis onto IscU, an Fe-S scaffold assembly protein, as well as other S acceptor proteins. This is Cysteine desulfurase IscS from Rickettsia prowazekii (strain Madrid E).